Here is a 511-residue protein sequence, read N- to C-terminus: Activin receptor type-2B (511 aa).

Residues 1–20 (MGASVALTFLLLLATFRAGS) form the signal peptide. Over 21 to 136 (GHDEVETREC…KPQPSASVLN (116 aa)) the chain is Extracellular. A disulfide bridge links Cys-30 with Cys-61. Asn-43 and Asn-67 each carry an N-linked (GlcNAc...) asparagine glycan. 3 disulfides stabilise this stretch: Cys-86/Cys-105, Cys-92/Cys-104, and Cys-106/Cys-111. Residues 137 to 157 (ILIYSLLPIVGLSMAILLAFW) traverse the membrane as a helical segment. Residues 158 to 511 (MYRHRKPSYG…VDLPPKESSI (354 aa)) are Cytoplasmic-facing. Residues 189–477 (LQLLDIKARG…LSAGCVEERI (289 aa)) enclose the Protein kinase domain. Residues 195-203 (KARGRFGCV) and Lys-216 each bind ATP. The active-site Proton acceptor is Asp-320.

It belongs to the protein kinase superfamily. TKL Ser/Thr protein kinase family. TGFB receptor subfamily.

The protein resides in the membrane. The catalysed reaction is L-threonyl-[receptor-protein] + ATP = O-phospho-L-threonyl-[receptor-protein] + ADP + H(+). It carries out the reaction L-seryl-[receptor-protein] + ATP = O-phospho-L-seryl-[receptor-protein] + ADP + H(+). In terms of biological role, receptor for activin A, activin B and inhibin A. Involved in transmembrane signaling. The protein is Activin receptor type-2B (acvr2b) of Xenopus laevis (African clawed frog).